A 67-amino-acid chain; its full sequence is Large ribosomal subunit protein uL29 (67 aa).

Belongs to the universal ribosomal protein uL29 family.

This Pelotomaculum thermopropionicum (strain DSM 13744 / JCM 10971 / SI) protein is Large ribosomal subunit protein uL29.